A 77-amino-acid polypeptide reads, in one-letter code: Translation initiation factor IF-1, chloroplastic (77 aa).

The region spanning 1–71 is the S1-like domain; sequence MKEQKLIHEG…TRGRIIYRLR (71 aa).

Belongs to the IF-1 family. In terms of assembly, component of the 30S ribosomal translation pre-initiation complex which assembles on the 30S ribosome in the order IF-2 and IF-3, IF-1 and N-formylmethionyl-tRNA(fMet); mRNA recruitment can occur at any time during PIC assembly.

It is found in the plastid. The protein localises to the chloroplast. Functionally, one of the essential components for the initiation of protein synthesis. Stabilizes the binding of IF-2 and IF-3 on the 30S subunit to which N-formylmethionyl-tRNA(fMet) subsequently binds. Helps modulate mRNA selection, yielding the 30S pre-initiation complex (PIC). Upon addition of the 50S ribosomal subunit IF-1, IF-2 and IF-3 are released leaving the mature 70S translation initiation complex. The protein is Translation initiation factor IF-1, chloroplastic of Ceratophyllum demersum (Rigid hornwort).